Here is an 852-residue protein sequence, read N- to C-terminus: Gamma-tubulin complex component 2 homolog (852 aa).

Serine 73 is subject to Phosphoserine.

Belongs to the TUBGCP family. As to quaternary structure, gamma-tubulin small complex (Gamma TuSC) is a heterotetrameric complex which contains two molecules of gamma-tubulin, and one molecule each of Dgrip84 and Dgrip91. The gamma-tubulin in this complex binds preferentially to GDP over GTP.

Its subcellular location is the cytoplasm. The protein resides in the cytoskeleton. It localises to the microtubule organizing center. The protein localises to the centrosome. It is found in the perinuclear region. The polypeptide is Gamma-tubulin complex component 2 homolog (Grip84) (Drosophila melanogaster (Fruit fly)).